The following is a 245-amino-acid chain: MKSIALTSLSLLPSALAQTIYLAGDSTMASSTPGWGDYIADSVSVEISNQAIGGRSARSYTREGRFQAIADVLQAGDYVVIEFGHNDGGSLSNDNGRTDCPGDGDETCETVYNGVAETVLTFPAYIENAALLFLEKGANVLISSQTPNNPWESGTFSYTPNRFVGYAELAAQRAGVDYVDHGAYTASIFEALGADTVNSFYPNDHTHTNAEGSSVVADAFLKAVVCSGVALNDVLTRTDFDGECL.

Residues M1 to A17 form the signal peptide. S26 acts as the Nucleophile in catalysis. A disulfide bridge connects residues C100 and C108. Active-site residues include D204 and H207. A disulfide bridge links C226 with C244.

This sequence belongs to the 'GDSL' lipolytic enzyme family.

The protein localises to the secreted. The enzyme catalyses Hydrolytic cleavage of 2-O-acetyl- or 3-O-acetyl groups of alpha-D-galacturonic acid in rhamnogalacturonan I.. Its function is as follows. Plays a key role in the degradation of rhamnogalacturonan in the cell wall. Involved in degradation of pectin. In Emericella nidulans (strain FGSC A4 / ATCC 38163 / CBS 112.46 / NRRL 194 / M139) (Aspergillus nidulans), this protein is Rhamnogalacturonan acetylesterase.